The sequence spans 293 residues: 4-hydroxy-tetrahydrodipicolinate synthase (293 aa).

Position 45 (Thr45) interacts with pyruvate. Tyr133 acts as the Proton donor/acceptor in catalysis. Lys162 acts as the Schiff-base intermediate with substrate in catalysis. Ile204 provides a ligand contact to pyruvate.

It belongs to the DapA family. In terms of assembly, homotetramer; dimer of dimers.

The protein resides in the cytoplasm. The enzyme catalyses L-aspartate 4-semialdehyde + pyruvate = (2S,4S)-4-hydroxy-2,3,4,5-tetrahydrodipicolinate + H2O + H(+). It functions in the pathway amino-acid biosynthesis; L-lysine biosynthesis via DAP pathway; (S)-tetrahydrodipicolinate from L-aspartate: step 3/4. Catalyzes the condensation of (S)-aspartate-beta-semialdehyde [(S)-ASA] and pyruvate to 4-hydroxy-tetrahydrodipicolinate (HTPA). In Brucella abortus biovar 1 (strain 9-941), this protein is 4-hydroxy-tetrahydrodipicolinate synthase.